The chain runs to 61 residues: Small ribosomal subunit protein uS14B (61 aa).

Residues Cys-24, Cys-27, Cys-40, and Cys-43 each contribute to the Zn(2+) site.

The protein belongs to the universal ribosomal protein uS14 family. Zinc-binding uS14 subfamily. In terms of assembly, part of the 30S ribosomal subunit. Contacts proteins S3 and S10. The cofactor is Zn(2+).

Functionally, binds 16S rRNA, required for the assembly of 30S particles and may also be responsible for determining the conformation of the 16S rRNA at the A site. This chain is Small ribosomal subunit protein uS14B, found in Cutibacterium acnes (strain DSM 16379 / KPA171202) (Propionibacterium acnes).